We begin with the raw amino-acid sequence, 487 residues long: Protein nucleotidyltransferase YdiU (487 aa).

Positions 90, 92, 93, 113, 125, 126, 176, and 183 each coordinate ATP. Asp-252 functions as the Proton acceptor in the catalytic mechanism. Asn-253 and Asp-262 together coordinate Mg(2+). ATP is bound at residue Asp-262.

The protein belongs to the SELO family. It depends on Mg(2+) as a cofactor. Requires Mn(2+) as cofactor.

The catalysed reaction is L-seryl-[protein] + ATP = 3-O-(5'-adenylyl)-L-seryl-[protein] + diphosphate. The enzyme catalyses L-threonyl-[protein] + ATP = 3-O-(5'-adenylyl)-L-threonyl-[protein] + diphosphate. It catalyses the reaction L-tyrosyl-[protein] + ATP = O-(5'-adenylyl)-L-tyrosyl-[protein] + diphosphate. It carries out the reaction L-histidyl-[protein] + UTP = N(tele)-(5'-uridylyl)-L-histidyl-[protein] + diphosphate. The catalysed reaction is L-seryl-[protein] + UTP = O-(5'-uridylyl)-L-seryl-[protein] + diphosphate. The enzyme catalyses L-tyrosyl-[protein] + UTP = O-(5'-uridylyl)-L-tyrosyl-[protein] + diphosphate. In terms of biological role, nucleotidyltransferase involved in the post-translational modification of proteins. It can catalyze the addition of adenosine monophosphate (AMP) or uridine monophosphate (UMP) to a protein, resulting in modifications known as AMPylation and UMPylation. The polypeptide is Protein nucleotidyltransferase YdiU (Pseudomonas syringae pv. tomato (strain ATCC BAA-871 / DC3000)).